The chain runs to 295 residues: Ribosomal protein L11 methyltransferase (295 aa).

Residues Thr-150, Gly-171, Asp-193, and Asn-232 each contribute to the S-adenosyl-L-methionine site.

The protein belongs to the methyltransferase superfamily. PrmA family.

It localises to the cytoplasm. The enzyme catalyses L-lysyl-[protein] + 3 S-adenosyl-L-methionine = N(6),N(6),N(6)-trimethyl-L-lysyl-[protein] + 3 S-adenosyl-L-homocysteine + 3 H(+). Functionally, methylates ribosomal protein L11. This chain is Ribosomal protein L11 methyltransferase, found in Neisseria gonorrhoeae (strain ATCC 700825 / FA 1090).